The chain runs to 113 residues: Small ribosomal subunit protein bS6 (113 aa).

Belongs to the bacterial ribosomal protein bS6 family.

Binds together with bS18 to 16S ribosomal RNA. This chain is Small ribosomal subunit protein bS6 (rpsF), found in Synechocystis sp. (strain ATCC 27184 / PCC 6803 / Kazusa).